We begin with the raw amino-acid sequence, 167 residues long: NAD(P)H-quinone oxidoreductase subunit I, chloroplastic (167 aa).

2 4Fe-4S ferredoxin-type domains span residues 55-84 (GRIH…VDWK) and 95-124 (LNYS…MTEE). 8 residues coordinate [4Fe-4S] cluster: Cys64, Cys67, Cys70, Cys74, Cys104, Cys107, Cys110, and Cys114.

Belongs to the complex I 23 kDa subunit family. As to quaternary structure, NDH is composed of at least 16 different subunits, 5 of which are encoded in the nucleus. [4Fe-4S] cluster is required as a cofactor.

It localises to the plastid. The protein localises to the chloroplast thylakoid membrane. It carries out the reaction a plastoquinone + NADH + (n+1) H(+)(in) = a plastoquinol + NAD(+) + n H(+)(out). The enzyme catalyses a plastoquinone + NADPH + (n+1) H(+)(in) = a plastoquinol + NADP(+) + n H(+)(out). In terms of biological role, NDH shuttles electrons from NAD(P)H:plastoquinone, via FMN and iron-sulfur (Fe-S) centers, to quinones in the photosynthetic chain and possibly in a chloroplast respiratory chain. The immediate electron acceptor for the enzyme in this species is believed to be plastoquinone. Couples the redox reaction to proton translocation, and thus conserves the redox energy in a proton gradient. In Vitis vinifera (Grape), this protein is NAD(P)H-quinone oxidoreductase subunit I, chloroplastic.